The chain runs to 37 residues: Diptericin (37 aa).

The disordered stretch occupies residues 1-37 (DLHIPPPDNKINWPQLSGGGGGSPKTGYDININAQQK).

This sequence belongs to the attacin/sarcotoxin-2 family. As to expression, synthesized by the fat body and secreted into the hemolymph.

It is found in the secreted. In terms of biological role, acute phase protein with antibacterial activity against the Gram-negative bacteria E.coli (MIC=6.25 ug/ml) and S.sonnei (MIC=12.5 ug/ml). Lacks antibacterial activity against the Gram-negative bacteria P.vulgaris, P.rettgeri and P.aeruginosa, and against the Gram-positive bacteria B.subtilis, S.aureus, M.luteus, B.megaterium, C.bovis and E.cloacae. This Sarcophaga peregrina (Flesh fly) protein is Diptericin.